We begin with the raw amino-acid sequence, 154 residues long: Lipoprotein signal peptidase (154 aa).

The next 2 membrane-spanning stretches (helical) occupy residues G55–M75 and L84–I104. Catalysis depends on residues D111 and D129. Residues I124 to F144 traverse the membrane as a helical segment.

This sequence belongs to the peptidase A8 family.

The protein localises to the cell membrane. It carries out the reaction Release of signal peptides from bacterial membrane prolipoproteins. Hydrolyzes -Xaa-Yaa-Zaa-|-(S,diacylglyceryl)Cys-, in which Xaa is hydrophobic (preferably Leu), and Yaa (Ala or Ser) and Zaa (Gly or Ala) have small, neutral side chains.. Its pathway is protein modification; lipoprotein biosynthesis (signal peptide cleavage). Its function is as follows. This protein specifically catalyzes the removal of signal peptides from prolipoproteins. In Listeria innocua serovar 6a (strain ATCC BAA-680 / CLIP 11262), this protein is Lipoprotein signal peptidase.